Consider the following 90-residue polypeptide: Accessory gland-specific peptide 26Ab (90 aa).

Positions 1–21 are cleaved as a signal peptide; that stretch reads MNYFAVICIFSCICLWQFSDA.

Main cells and secondary cells of the accessory glands of 1 day old virgin males (at protein level). In 5 day old virgin males, only detected in the secondary cells (at protein level). Reappears in the main cells after mating (at protein level). First detected in adult males 3-4 hr after eclosion, levels increase reaching a peak at day 3-5 which is maintained until at least day 10 of adulthood (at protein level). In unmated male adults, levels are maintained for the first 6 days of adulthood and then gradually decrease for at least the next 8 days. No expression in females.

The protein localises to the secreted. It is found in the extracellular space. It localises to the cytoplasm. Its function is as follows. This protein is transferred from male to female during mating and may affect egglaying and behavior after mating. This is Accessory gland-specific peptide 26Ab from Drosophila melanogaster (Fruit fly).